A 120-amino-acid polypeptide reads, in one-letter code: Flagellar protein FliT (120 aa).

Residues 1-50 (MTNFIPSLTDWHALHALSITMLDLAHSGKWDELIEQEMNYVQLVEGIARN) are required for homodimerization. The interval 59–97 (LINQAKEILNAVLRNEAELKTLLQHRMEELRQLIDQTGK) is fliD binding.

It belongs to the FliT family. As to quaternary structure, homodimer. Interacts with FliD and FlhC.

The protein resides in the cytoplasm. Its subcellular location is the cytosol. Functionally, dual-function protein that regulates the transcription of class 2 flagellar operons and that also acts as an export chaperone for the filament-capping protein FliD. As a transcriptional regulator, acts as an anti-FlhDC factor; it directly binds FlhC, thus inhibiting the binding of the FlhC/FlhD complex to class 2 promoters, resulting in decreased expression of class 2 flagellar operons. As a chaperone, effects FliD transition to the membrane by preventing its premature polymerization, and by directing it to the export apparatus. The chain is Flagellar protein FliT from Citrobacter koseri (strain ATCC BAA-895 / CDC 4225-83 / SGSC4696).